A 220-amino-acid chain; its full sequence is Deoxyribose-phosphate aldolase (220 aa).

D89 functions as the Proton donor/acceptor in the catalytic mechanism. K151 serves as the catalytic Schiff-base intermediate with acetaldehyde. K180 acts as the Proton donor/acceptor in catalysis.

Belongs to the DeoC/FbaB aldolase family. DeoC type 1 subfamily.

It localises to the cytoplasm. It catalyses the reaction 2-deoxy-D-ribose 5-phosphate = D-glyceraldehyde 3-phosphate + acetaldehyde. It functions in the pathway carbohydrate degradation; 2-deoxy-D-ribose 1-phosphate degradation; D-glyceraldehyde 3-phosphate and acetaldehyde from 2-deoxy-alpha-D-ribose 1-phosphate: step 2/2. Catalyzes a reversible aldol reaction between acetaldehyde and D-glyceraldehyde 3-phosphate to generate 2-deoxy-D-ribose 5-phosphate. In Streptococcus equi subsp. equi (strain 4047), this protein is Deoxyribose-phosphate aldolase.